The following is a 388-amino-acid chain: Succinate--CoA ligase [ADP-forming] subunit beta (388 aa).

Residues 9–244 form the ATP-grasp domain; sequence KQLFAEYGLP…PSQDDPREAH (236 aa). ATP contacts are provided by residues K46, 53–55, E99, T102, and E107; that span reads GRG. Mg(2+)-binding residues include N199 and D213. Residues N264 and 321-323 contribute to the substrate site; that span reads GIV.

Belongs to the succinate/malate CoA ligase beta subunit family. Heterotetramer of two alpha and two beta subunits. Mg(2+) serves as cofactor.

It carries out the reaction succinate + ATP + CoA = succinyl-CoA + ADP + phosphate. It catalyses the reaction GTP + succinate + CoA = succinyl-CoA + GDP + phosphate. Its pathway is carbohydrate metabolism; tricarboxylic acid cycle; succinate from succinyl-CoA (ligase route): step 1/1. Its function is as follows. Succinyl-CoA synthetase functions in the citric acid cycle (TCA), coupling the hydrolysis of succinyl-CoA to the synthesis of either ATP or GTP and thus represents the only step of substrate-level phosphorylation in the TCA. The beta subunit provides nucleotide specificity of the enzyme and binds the substrate succinate, while the binding sites for coenzyme A and phosphate are found in the alpha subunit. The chain is Succinate--CoA ligase [ADP-forming] subunit beta from Pseudomonas fluorescens (strain SBW25).